The sequence spans 324 residues: Thiamine thiazole synthase (324 aa).

Residues Cys-86, 107–108 (EA), Gly-115, and Val-180 contribute to the substrate site. Cys-213 carries the 2,3-didehydroalanine (Cys) modification. Substrate-binding positions include Asp-215, His-230, Met-282, and 292–294 (RMG).

Belongs to the THI4 family. In terms of assembly, homooctamer. Fe cation serves as cofactor. Post-translationally, during the catalytic reaction, a sulfide is transferred from Cys-213 to a reaction intermediate, generating a dehydroalanine residue.

The protein localises to the cytoplasm. The protein resides in the nucleus. It carries out the reaction [ADP-thiazole synthase]-L-cysteine + glycine + NAD(+) = [ADP-thiazole synthase]-dehydroalanine + ADP-5-ethyl-4-methylthiazole-2-carboxylate + nicotinamide + 3 H2O + 2 H(+). Functionally, involved in biosynthesis of the thiamine precursor thiazole. Catalyzes the conversion of NAD and glycine to adenosine diphosphate 5-(2-hydroxyethyl)-4-methylthiazole-2-carboxylic acid (ADT), an adenylated thiazole intermediate. The reaction includes an iron-dependent sulfide transfer from a conserved cysteine residue of the protein to a thiazole intermediate. The enzyme can only undergo a single turnover, which suggests it is a suicide enzyme. May have additional roles in adaptation to various stress conditions and in DNA damage tolerance. This chain is Thiamine thiazole synthase (sti35), found in Fusarium solani subsp. phaseoli (Nectria haematococca).